The sequence spans 294 residues: Probable 2-(5''-triphosphoribosyl)-3'-dephosphocoenzyme-A synthase (294 aa).

Belongs to the CitG/MdcB family.

The enzyme catalyses 3'-dephospho-CoA + ATP = 2'-(5''-triphospho-alpha-D-ribosyl)-3'-dephospho-CoA + adenine. This Streptococcus pyogenes serotype M5 (strain Manfredo) protein is Probable 2-(5''-triphosphoribosyl)-3'-dephosphocoenzyme-A synthase.